Consider the following 171-residue polypeptide: Disulfide bond formation protein B (171 aa).

Residues M1 to V8 are Cytoplasmic-facing. A helical membrane pass occupies residues S9–Y25. Over L26–V43 the chain is Periplasmic. The cysteines at positions 35 and 38 are disulfide-linked. Residues G44–P60 traverse the membrane as a helical segment. At V61–R67 the chain is on the cytoplasmic side. A helical transmembrane segment spans residues F68–G85. Over R86–V142 the chain is Periplasmic. The cysteines at positions 101 and 128 are disulfide-linked. A helical membrane pass occupies residues W143 to R161. The Cytoplasmic segment spans residues F162–K171.

Belongs to the DsbB family.

It localises to the cell inner membrane. Required for disulfide bond formation in some periplasmic proteins. Acts by oxidizing the DsbA protein. The chain is Disulfide bond formation protein B from Acinetobacter baumannii (strain ATCC 17978 / DSM 105126 / CIP 53.77 / LMG 1025 / NCDC KC755 / 5377).